The sequence spans 351 residues: Dihydroorotate dehydrogenase (quinone) (351 aa).

Residues 67 to 71 (AGFDK) and threonine 91 each bind FMN. Lysine 71 lines the substrate pocket. 116–120 (NAMGF) is a binding site for substrate. Positions 145 and 178 each coordinate FMN. A substrate-binding site is contributed by asparagine 178. Serine 181 functions as the Nucleophile in the catalytic mechanism. Substrate is bound at residue asparagine 183. FMN is bound by residues lysine 214 and threonine 242. Residue 243 to 244 (NT) participates in substrate binding. FMN-binding positions include glycine 262, glycine 291, and 312-313 (YS).

Belongs to the dihydroorotate dehydrogenase family. Type 2 subfamily. As to quaternary structure, monomer. FMN serves as cofactor.

The protein localises to the cell membrane. It carries out the reaction (S)-dihydroorotate + a quinone = orotate + a quinol. The protein operates within pyrimidine metabolism; UMP biosynthesis via de novo pathway; orotate from (S)-dihydroorotate (quinone route): step 1/1. Functionally, catalyzes the conversion of dihydroorotate to orotate with quinone as electron acceptor. This chain is Dihydroorotate dehydrogenase (quinone), found in Helicobacter pylori (strain P12).